Here is a 276-residue protein sequence, read N- to C-terminus: Urease accessory protein UreD (276 aa).

This sequence belongs to the UreD family. As to quaternary structure, ureD, UreF and UreG form a complex that acts as a GTP-hydrolysis-dependent molecular chaperone, activating the urease apoprotein by helping to assemble the nickel containing metallocenter of UreC. The UreE protein probably delivers the nickel.

Its subcellular location is the cytoplasm. In terms of biological role, required for maturation of urease via the functional incorporation of the urease nickel metallocenter. The chain is Urease accessory protein UreD from Verminephrobacter eiseniae (strain EF01-2).